The chain runs to 460 residues: GTPase Der (460 aa).

EngA-type G domains follow at residues 21-187 and 198-373; these read PRVV…FSVD and VRLA…AQLN. Residues 27-34, 74-78, 141-144, 204-211, 251-255, and 316-319 contribute to the GTP site; these read GRPNVGKS, DTSGF, NKTE, GKPNTGKS, DTAGI, and NKWD. A KH-like domain is found at 374 to 457; that stretch reads TKVETSALNT…PVKLTIRKNC (84 aa).

This sequence belongs to the TRAFAC class TrmE-Era-EngA-EngB-Septin-like GTPase superfamily. EngA (Der) GTPase family. As to quaternary structure, associates with the 50S ribosomal subunit.

GTPase that plays an essential role in the late steps of ribosome biogenesis. The polypeptide is GTPase Der (Treponema pallidum subsp. pallidum (strain SS14)).